A 377-amino-acid polypeptide reads, in one-letter code: Protein MULTIPOLAR SPINDLE 1 (377 aa).

The Nuclear localization signal motif lies at 117 to 124; that stretch reads LRRRFLRL.

As to expression, expressed in roots, stems, leaves, inflorescences and seedlings. Strongly expressed in meiocytes.

The protein resides in the nucleus. The protein localises to the cytoplasm. It is found in the cytoskeleton. It localises to the spindle. Functionally, involved in meiotic spindle organization in meiocytes thus regulating chromosome segregation. Required for formation of meiotic DNA double-strand breaks (DSBs) during early recombination processes. This Arabidopsis thaliana (Mouse-ear cress) protein is Protein MULTIPOLAR SPINDLE 1.